Reading from the N-terminus, the 239-residue chain is Eukaryotic translation initiation factor 6 (239 aa).

The protein belongs to the eIF-6 family. As to quaternary structure, monomer. Associates with the 60S ribosomal subunit.

The protein localises to the cytoplasm. Its subcellular location is the nucleus. It localises to the nucleolus. Functionally, binds to the 60S ribosomal subunit and prevents its association with the 40S ribosomal subunit to form the 80S initiation complex in the cytoplasm. May also be involved in ribosome biogenesis. The sequence is that of Eukaryotic translation initiation factor 6 from Entamoeba dispar (strain ATCC PRA-260 / SAW760).